A 378-amino-acid polypeptide reads, in one-letter code: Carbazole 1,9a-dioxygenase, terminal oxygenase component CarAa (378 aa).

Positions 29–135 (WYPVRLASEI…VEEAKGLIFV (107 aa)) constitute a Rieske domain. Positions 69, 71, 90, and 93 each coordinate [2Fe-2S] cluster.

Homotrimer. Carbazole 1,9a-dioxygenase complex consists of a terminal oxygenase component CarAa, a ferredoxin reductase component fdr and a ferredoxin component CarAc. It depends on [2Fe-2S] cluster as a cofactor.

The enzyme catalyses 9H-carbazole + NADH + O2 + H(+) = 2'-aminobiphenyl-2,3-diol + NAD(+). It catalyses the reaction 9H-carbazole + NADPH + O2 + H(+) = 2'-aminobiphenyl-2,3-diol + NADP(+). Functionally, part of the multicomponent carbazole 1,9a-dioxygenase (CARDO), that converts carbazole (CAR) into 2-aminobiphenyl-2,3-diol. Catalyzes the dioxygenation at the angular (C-9a) and adjacent (C-1) positions of carbazole to yield a highly unstable cis-hydrodiol intermediate which is spontaneously converted to 2-aminobiphenyl-2,3-diol. The sequence is that of Carbazole 1,9a-dioxygenase, terminal oxygenase component CarAa (carAa) from Sphingomonas sp.